The chain runs to 146 residues: Hemoglobin subunit beta (146 aa).

In terms of domain architecture, Globin spans histidine 2 to histidine 146. Histidine 63 and histidine 92 together coordinate heme b.

The protein belongs to the globin family. Heterotetramer of two alpha chains and two beta chains. In terms of tissue distribution, red blood cells.

Functionally, involved in oxygen transport from the lung to the various peripheral tissues. This Columba livia (Rock dove) protein is Hemoglobin subunit beta (HBB).